We begin with the raw amino-acid sequence, 200 residues long: Proteasome subunit beta 2 (200 aa).

The propeptide at 1 to 7 (MEEKKTG) is removed in mature form; by autocatalysis. Catalysis depends on T8, which acts as the Nucleophile.

It belongs to the peptidase T1B family. As to quaternary structure, the 20S proteasome core is composed of 14 alpha and 14 beta subunits that assemble into four stacked heptameric rings, resulting in a barrel-shaped structure. The two inner rings, each composed of seven catalytic beta subunits, are sandwiched by two outer rings, each composed of seven alpha subunits. The catalytic chamber with the active sites is on the inside of the barrel. Has a gated structure, the ends of the cylinder being occluded by the N-termini of the alpha-subunits. Is capped at one or both ends by the proteasome regulatory ATPase, PAN.

It is found in the cytoplasm. The catalysed reaction is Cleavage of peptide bonds with very broad specificity.. Its activity is regulated as follows. The formation of the proteasomal ATPase PAN-20S proteasome complex, via the docking of the C-termini of PAN into the intersubunit pockets in the alpha-rings, triggers opening of the gate for substrate entry. Interconversion between the open-gate and close-gate conformations leads to a dynamic regulation of the 20S proteasome proteolysis activity. Component of the proteasome core, a large protease complex with broad specificity involved in protein degradation. The protein is Proteasome subunit beta 2 of Thermococcus gammatolerans (strain DSM 15229 / JCM 11827 / EJ3).